The chain runs to 217 residues: tRNA (guanine-N(7)-)-methyltransferase (217 aa).

S-adenosyl-L-methionine is bound by residues Glu-44, Glu-69, Asp-96, and Asp-118. Asp-118 is an active-site residue. Residue Lys-122 participates in substrate binding. Residues 124–129 (RHEKRR) form an interaction with RNA region. Residues Asp-154 and 191-194 (TEYE) contribute to the substrate site.

Belongs to the class I-like SAM-binding methyltransferase superfamily. TrmB family.

The catalysed reaction is guanosine(46) in tRNA + S-adenosyl-L-methionine = N(7)-methylguanosine(46) in tRNA + S-adenosyl-L-homocysteine. It participates in tRNA modification; N(7)-methylguanine-tRNA biosynthesis. In terms of biological role, catalyzes the formation of N(7)-methylguanine at position 46 (m7G46) in tRNA. This is tRNA (guanine-N(7)-)-methyltransferase from Bacillus velezensis (strain DSM 23117 / BGSC 10A6 / LMG 26770 / FZB42) (Bacillus amyloliquefaciens subsp. plantarum).